Here is a 753-residue protein sequence, read N- to C-terminus: 5-methyltetrahydropteroyltriglutamate--homocysteine methyltransferase (753 aa).

5-methyltetrahydropteroyltri-L-glutamate is bound by residues 17 to 20 (RELK) and lysine 117. Residues 431-433 (IGS) and glutamate 484 each bind L-homocysteine. Residues 431-433 (IGS) and glutamate 484 contribute to the L-methionine site. Residues 515-516 (RC) and tryptophan 561 contribute to the 5-methyltetrahydropteroyltri-L-glutamate site. Aspartate 599 serves as a coordination point for L-homocysteine. Position 599 (aspartate 599) interacts with L-methionine. Residue glutamate 605 coordinates 5-methyltetrahydropteroyltri-L-glutamate. Residues histidine 641, cysteine 643, and glutamate 665 each contribute to the Zn(2+) site. Catalysis depends on histidine 694, which acts as the Proton donor. Residue cysteine 726 coordinates Zn(2+).

It belongs to the vitamin-B12 independent methionine synthase family. The cofactor is Zn(2+).

It catalyses the reaction 5-methyltetrahydropteroyltri-L-glutamate + L-homocysteine = tetrahydropteroyltri-L-glutamate + L-methionine. Its pathway is amino-acid biosynthesis; L-methionine biosynthesis via de novo pathway; L-methionine from L-homocysteine (MetE route): step 1/1. Functionally, catalyzes the transfer of a methyl group from 5-methyltetrahydrofolate to homocysteine resulting in methionine formation. The sequence is that of 5-methyltetrahydropteroyltriglutamate--homocysteine methyltransferase from Escherichia coli O157:H7.